The primary structure comprises 158 residues: Ribosome maturation factor RimP (158 aa).

This sequence belongs to the RimP family.

Its subcellular location is the cytoplasm. Functionally, required for maturation of 30S ribosomal subunits. The protein is Ribosome maturation factor RimP of Lactiplantibacillus plantarum (strain ATCC BAA-793 / NCIMB 8826 / WCFS1) (Lactobacillus plantarum).